The sequence spans 861 residues: ToMV susceptible protein tm-2 (861 aa).

A coiled-coil region spans residues 63–83 (VKNLLKDIQELAGDVEDLLDD). The NB-ARC domain occupies 162–388 (DDFNMLQAKL…LESMGHKVQD (227 aa)). 185 to 192 (GMPGLGKT) provides a ligand contact to ATP. 12 LRR repeats span residues 225–248 (LDIAKQIGLTEQKIKENLEDNLRS), 305–327 (LHALQPLESEKSFELFTKKIFNF), 388–411 (DGCAKVLALSYNDLPIASRPCFLY), 449–472 (LAEDVLNDLVSRNLIQLAKRTYNG), 510–536 (VARLRRITFYSDNVMIEFFGSNPKLEK), 585–608 (MTCLRYLKLEGNICGKLPNSIVKL), 609–631 (TRLETIDIDRRSLIQLPSGVWES), 652–680 (ISSFYPNIYSLHPNNLQTLMWIPDKFFEP), 689–713 (LRKLGILGVSNSTVKILSTCRPVPK), 735–758 (YPKIVKLHLNVDRTIALNSEAFPP), 781–804 (LPKLRKLKMVICKYNEEKMALSGE), and 810–835 (FPQLEVLHIHSPNGLSEVTCTDDVSM).

The protein belongs to the disease resistance NB-LRR family. In terms of assembly, (Microbial infection) Fails to interact with the tobamovirus mouvement protein of tobacco mosaic virus (TMV).

The protein resides in the cell membrane. In terms of biological role, potential inhibitor of viral mouvements which may confer resistance to some tobamoviruses but not to the tomato mosaic virus (ToMV) and tobacco mosaic virus (TMV). This chain is ToMV susceptible protein tm-2, found in Solanum lycopersicum (Tomato).